A 534-amino-acid chain; its full sequence is MSEVVAETARRRTFAIISHPDAGKTTLTEKLLLFGGAIQMAGSVKSRKAVRHATSDWMTLEKERGISVTSSVMQFPYEGKIINLLDTPGHADFGEDTYRVLTAVDSALMVIDVAKGVEERTIKLMEVCRLRDTPIMTFINKLDREGKNPIELLDEVERVLGIQCAPVTWPIGMGKRLRGVVNLLTNEVHLYEPGRNFTRQDSTIFTSLEAPGLAERIGEQMLADLHEELELIQGASACFDPTEYLGGRQTPVFFGSGVNNFGVQPLLDFFVEHAPSPQQRDTTSRVVLPTEEKLTGFVFKIQANMDPQHRDRVAFMRVCSGRFTAGMKAFHVRSSKDLKLANALTFMASDRESVAEAFPGDVIGIHNHGRVSIGDTFTEGEVLSFTGIPSFAPELFRRACLGDPLKLKQLQKGLTQLSEEGATQFFRPLMSNDLILGAVGMLQFDVVAYRLKNEYGVDATFEPVSITTARWVYCDNSKTLEEFREKNVTNLAVDASGELVYLAPTRVNLQLAQERAPEIHFFATREHAYAVGVD.

The region spanning 9–278 (ARRRTFAIIS…FFVEHAPSPQ (270 aa)) is the tr-type G domain. Residues 18–25 (SHPDAGKT), 86–90 (DTPGH), and 140–143 (NKLD) each bind GTP.

This sequence belongs to the TRAFAC class translation factor GTPase superfamily. Classic translation factor GTPase family. PrfC subfamily.

The protein localises to the cytoplasm. Functionally, increases the formation of ribosomal termination complexes and stimulates activities of RF-1 and RF-2. It binds guanine nucleotides and has strong preference for UGA stop codons. It may interact directly with the ribosome. The stimulation of RF-1 and RF-2 is significantly reduced by GTP and GDP, but not by GMP. The protein is Peptide chain release factor 3 of Xylella fastidiosa (strain M12).